A 129-amino-acid polypeptide reads, in one-letter code: Large ribosomal subunit protein bL12 (129 aa).

The span at 95–123 (MVESTPKSIKEGVSKEDAEEAKKSLEDAG) shows a compositional bias: basic and acidic residues. Residues 95 to 129 (MVESTPKSIKEGVSKEDAEEAKKSLEDAGGKASLK) are disordered.

This sequence belongs to the bacterial ribosomal protein bL12 family. Homodimer. Part of the ribosomal stalk of the 50S ribosomal subunit. Forms a multimeric L10(L12)X complex, where L10 forms an elongated spine to which 2 to 4 L12 dimers bind in a sequential fashion. Binds GTP-bound translation factors.

Forms part of the ribosomal stalk which helps the ribosome interact with GTP-bound translation factors. Is thus essential for accurate translation. The sequence is that of Large ribosomal subunit protein bL12 from Acaryochloris marina (strain MBIC 11017).